The chain runs to 133 residues: Helix-loop-helix protein 1 (133 aa).

Residues 1–78 (MMLNSDTMEL…RRRATAKYRT (78 aa)) form a disordered region. The segment covering 25–39 (DCGGGPGPDGAGSGD) has biased composition (gly residues). Over residues 52-65 (ESGRKDLQHLSREE) the composition is skewed to basic and acidic residues. Positions 66 to 78 (RRRRRRATAKYRT) are enriched in basic residues. Positions 75–127 (KYRTAHATRERIRVEAFNLAFAELRKLLPTLPPDKKLSKIEILRLAICYISYL) constitute a bHLH domain.

In terms of assembly, efficient DNA binding requires dimerization with another bHLH protein.

It localises to the nucleus. Its function is as follows. May serve as DNA-binding protein and may be involved in the control of cell-type determination, possibly within the developing nervous system. The sequence is that of Helix-loop-helix protein 1 (Nhlh1) from Mus musculus (Mouse).